A 145-amino-acid polypeptide reads, in one-letter code: Protein BUD31 homolog 1 (145 aa).

This sequence belongs to the BUD31 (G10) family.

The protein resides in the nucleus. In Oryza sativa subsp. japonica (Rice), this protein is Protein BUD31 homolog 1.